The primary structure comprises 252 residues: Large ribosomal subunit protein uL29m (252 aa).

Lysine 146 bears the N6-acetyllysine mark.

This sequence belongs to the universal ribosomal protein uL29 family. As to quaternary structure, component of the mitochondrial ribosome large subunit (39S) which comprises a 16S rRNA and about 50 distinct proteins.

It localises to the mitochondrion. The polypeptide is Large ribosomal subunit protein uL29m (MRPL47) (Bos taurus (Bovine)).